A 490-amino-acid polypeptide reads, in one-letter code: Cytochrome P450 monooxygenase aclL (490 aa).

Residues 1-21 form a helical membrane-spanning segment; that stretch reads MLFSLGPLTIVYGLVIFVVAK. An N-linked (GlcNAc...) asparagine glycan is attached at Asn176. Residue Cys434 coordinates heme.

Belongs to the cytochrome P450 family. The cofactor is heme.

The protein resides in the membrane. Its pathway is mycotoxin biosynthesis. Functionally, cytochrome P450 monooxygenase; part of the gene cluster that mediates the biosynthesis of aspirochlorine (or antibiotic A30641), an unusual halogenated spiro compound with distinctive antifungal properties due to selective inhibition of protein biosynthesis, and which is also active against bacteria, viruses, and murine tumor cells. The non-ribosomal peptide synthetase (NRPS) aclP is responsible the formation of the diketopiperazine (DKP) core from the condensation of 2 phenylalanine residues. One Phe residue is tailored into chlorotyrosine by hydroxylation and chlorination, whereas the second Phe undergoes an unprecedented C-C bond cleavage to be converted into glycine. After formation of the DKP, sulfur is incorporated into the DKP by conjugation with glutathione by aclG, followed by its stepwise degradation to the thiol by aclI, aclJ and aclK, and the dithiol oxidation by aclT. In addition, oxygenases (aclB, aclC, aclL and aclO) and O-methyltransferases (aclM and aclU) act as tailoring enzymes to produce the intermediate dechloroaspirochlorine. Ultimately, chlorination of dechloroaspirochlorine by the halogenase aclH is the last step in the aspirochlorine pathway. The protein is Cytochrome P450 monooxygenase aclL of Aspergillus oryzae (strain ATCC 42149 / RIB 40) (Yellow koji mold).